A 125-amino-acid chain; its full sequence is Cu-Zn superoxide dismutase-like protein (125 aa).

A disulfide bridge links C52 with C102.

This sequence belongs to the Cu-Zn superoxide dismutase family.

It is found in the host cytoplasm. In terms of biological role, virion protein with no enzymatic activity. The protein is Cu-Zn superoxide dismutase-like protein of Mus musculus (Mouse).